Consider the following 578-residue polypeptide: Arginine--tRNA ligase (578 aa).

The 'HIGH' region signature appears at 127–137 (PNLAKEMHVGH).

The protein belongs to the class-I aminoacyl-tRNA synthetase family. Monomer.

Its subcellular location is the cytoplasm. The enzyme catalyses tRNA(Arg) + L-arginine + ATP = L-arginyl-tRNA(Arg) + AMP + diphosphate. This Pseudomonas savastanoi pv. phaseolicola (strain 1448A / Race 6) (Pseudomonas syringae pv. phaseolicola (strain 1448A / Race 6)) protein is Arginine--tRNA ligase.